The following is a 691-amino-acid chain: Threonine--tRNA ligase (691 aa).

The interval M1 to V22 is disordered. Residues M1–A73 form the TGS domain. The catalytic stretch occupies residues D268 to P574. Positions 373, 424, and 551 each coordinate Zn(2+).

Belongs to the class-II aminoacyl-tRNA synthetase family. Homodimer. Zn(2+) serves as cofactor.

It localises to the cytoplasm. The catalysed reaction is tRNA(Thr) + L-threonine + ATP = L-threonyl-tRNA(Thr) + AMP + diphosphate + H(+). Catalyzes the attachment of threonine to tRNA(Thr) in a two-step reaction: L-threonine is first activated by ATP to form Thr-AMP and then transferred to the acceptor end of tRNA(Thr). Also edits incorrectly charged L-seryl-tRNA(Thr). This chain is Threonine--tRNA ligase, found in Mycobacterium marinum (strain ATCC BAA-535 / M).